The following is a 986-amino-acid chain: MAEAIERSLSDIDVVAIRPASQADAKAALSVLKDAAKGSDHIAKLIASDAPLKDFLVAAFALSPFLRDTARSHPAILEALLSETLPAFLKRRIEAARVAWRGDAAGAALPDAEIMTRLRRAKREVAFAVALADLSRLFGGRETTGWLSDFAEAAVSAAIDHLLLGAHESGKFVLKDSSAPSTASGVVVLGMGKLGAGELNYSSDIDLVVFYDPQSSIITNRDDAPETFARLLRRLIRILQERTGDGYVFRTDLRLRPDPGSTPLAIPVEAAMLYYESRGQNWERAAFIKARPIAGDLEAGERFLKELTPFVFRKYLDYAAIADIHSIKRQIHAHKGHGEIAVKGHNIKLGRGGIREIEFFVQTQQLIAGGRTPALRLRQTETMLRMLAESGWIDGATAEELIEAYWFLRDVEHRIQMVHDEQTHLLPETEPELRRIAYMLGFEDTASFSNALSRVLRTVERRYAQLFEQEAKLSTETGNLVFTGQQDDPDTLETLKKLGFQRPSDIANIIRTWHYGRYRATQSVEARERLTELTPELLRVFGESRRADEAFLRFDHFLSGLPAGIQLFSLLGNNPGLLSLIVNIMSSAPRLADIIAAKPHVFDGMLEPGLLAELPTRDYLAPRIATFVGGGRHYEEVLDRLRIIAAEQRFLIGIRLLTGAITGLQAGRALTDLADLIIAAALDAVLEEVRSAHGRFPGGRVAIVGMGKLGSHELTAGSDIDLILLYDYDDEVLESDGAKPLDPVRYFTRVTQRLIAALSAPTAEGILYDVDMRLRPSGNKGPVATRITAFAKYQRTEAWTWEHLALTRARCICGDESLVGEAEAIFAEILTEKRDIAKIRKDVEEMRGLIDKEKPPKDIWDFKLIPGGLVDIEFIAQYLALVAPARGVTSPPAGTHTLEALKALGAGMMNANDLDTAAEALVLFTELSQLVRLCIDGDFDPKEAPAGLVDLVCRAGDYPDLTHLEADIRRLSKAVRRIFQGVVAAA.

The adenylyl removase stretch occupies residues 1–471 (MAEAIERSLS…RYAQLFEQEA (471 aa)). An adenylyl transferase region spans residues 475–986 (TETGNLVFTG…RIFQGVVAAA (512 aa)).

Belongs to the GlnE family. It depends on Mg(2+) as a cofactor.

The catalysed reaction is [glutamine synthetase]-O(4)-(5'-adenylyl)-L-tyrosine + phosphate = [glutamine synthetase]-L-tyrosine + ADP. It catalyses the reaction [glutamine synthetase]-L-tyrosine + ATP = [glutamine synthetase]-O(4)-(5'-adenylyl)-L-tyrosine + diphosphate. In terms of biological role, involved in the regulation of glutamine synthetase GlnA, a key enzyme in the process to assimilate ammonia. When cellular nitrogen levels are high, the C-terminal adenylyl transferase (AT) inactivates GlnA by covalent transfer of an adenylyl group from ATP to specific tyrosine residue of GlnA, thus reducing its activity. Conversely, when nitrogen levels are low, the N-terminal adenylyl removase (AR) activates GlnA by removing the adenylyl group by phosphorolysis, increasing its activity. The regulatory region of GlnE binds the signal transduction protein PII (GlnB) which indicates the nitrogen status of the cell. The chain is Bifunctional glutamine synthetase adenylyltransferase/adenylyl-removing enzyme from Rhizobium meliloti (strain 1021) (Ensifer meliloti).